The primary structure comprises 126 residues: MGYRKLGRTSSQRKAMLRDLATDLIINERIETTEARAKEVRKAVEKMITLGKRGDLHARRQAAAFIRRELVTTTDAEGNETTSFALQKLFDDVAPRYAERQGGYTRILKVGPRRGDGAPVVVIELV.

The protein belongs to the bacterial ribosomal protein bL17 family. In terms of assembly, part of the 50S ribosomal subunit. Contacts protein L32.

The sequence is that of Large ribosomal subunit protein bL17 from Lysinibacillus sphaericus (strain C3-41).